The chain runs to 481 residues: Glutamyl-tRNA(Gln) amidotransferase subunit A (481 aa).

Residues lysine 78 and serine 153 each act as charge relay system in the active site. Serine 177 serves as the catalytic Acyl-ester intermediate.

The protein belongs to the amidase family. GatA subfamily. In terms of assembly, heterotrimer of A, B and C subunits.

The enzyme catalyses L-glutamyl-tRNA(Gln) + L-glutamine + ATP + H2O = L-glutaminyl-tRNA(Gln) + L-glutamate + ADP + phosphate + H(+). In terms of biological role, allows the formation of correctly charged Gln-tRNA(Gln) through the transamidation of misacylated Glu-tRNA(Gln) in organisms which lack glutaminyl-tRNA synthetase. The reaction takes place in the presence of glutamine and ATP through an activated gamma-phospho-Glu-tRNA(Gln). The sequence is that of Glutamyl-tRNA(Gln) amidotransferase subunit A from Borrelia garinii subsp. bavariensis (strain ATCC BAA-2496 / DSM 23469 / PBi) (Borreliella bavariensis).